Reading from the N-terminus, the 141-residue chain is Cholinesterase (141 aa).

The N-linked (GlcNAc...) asparagine glycan is linked to asparagine 39. 49–50 (GS) is a binding site for substrate. Residue serine 131 is the Acyl-ester intermediate of the active site. Residue serine 131 is modified to Phosphoserine.

It belongs to the type-B carboxylesterase/lipase family. Homotetramer; disulfide-linked. Dimer of dimers. In terms of tissue distribution, present in most cells except erythrocytes.

The protein localises to the secreted. The catalysed reaction is an acylcholine + H2O = a carboxylate + choline + H(+). In terms of biological role, esterase with broad substrate specificity. Contributes to the inactivation of the neurotransmitter acetylcholine. Can degrade neurotoxic organophosphate esters. In Ovis aries (Sheep), this protein is Cholinesterase (BCHE).